Here is a 338-residue protein sequence, read N- to C-terminus: Fructose-1,6-bisphosphatase 1 (338 aa).

At Ala2 the chain carries N-acetylalanine. Residues 18 to 22 and 28 to 32 contribute to the AMP site; these read VMEQG and TGELT. Residues Asp69 and Glu98 each coordinate Mg(2+). 113–114 contacts AMP; it reads KY. Mg(2+)-binding residues include Asp119, Leu121, and Asp122. Residue 122 to 125 participates in substrate binding; it reads DGSS. An AMP-binding site is contributed by Arg141. At Lys151 the chain carries N6-succinyllysine. Substrate is bound by residues 213–216, 244–249, Tyr265, and 275–277; these read NEGY, RYVGSM, and KLR. Tyr216, Tyr245, and Tyr265 each carry phosphotyrosine. Glu281 provides a ligand contact to Mg(2+).

Belongs to the FBPase class 1 family. Homotetramer. It depends on Mg(2+) as a cofactor. In terms of tissue distribution, detected in pancreatic beta-cell lines MIN6 and beta-TC and in liver (at protein level). Preferentially expressed in liver, with lower levels detected in pancreatic islets and intestine, and very low levels in blood, muscle, brain and spleen.

It catalyses the reaction beta-D-fructose 1,6-bisphosphate + H2O = beta-D-fructose 6-phosphate + phosphate. Its pathway is carbohydrate biosynthesis; gluconeogenesis. With respect to regulation, subject to complex allosteric regulation. The enzyme can assume an active R-state, or an inactive T-state. Intermediate conformations may exist. AMP acts as an allosteric inhibitor. AMP binding affects the turnover of bound substrate and not the affinity for substrate. Fructose 2,6-bisphosphate acts as a competitive inhibitor. Fructose 2,6-bisphosphate and AMP have synergistic effects. In terms of biological role, catalyzes the hydrolysis of fructose 1,6-bisphosphate to fructose 6-phosphate in the presence of divalent cations, acting as a rate-limiting enzyme in gluconeogenesis. Plays a role in regulating glucose sensing and insulin secretion of pancreatic beta-cells. Appears to modulate glycerol gluconeogenesis in liver. Important regulator of appetite and adiposity; increased expression of the protein in liver after nutrient excess increases circulating satiety hormones and reduces appetite-stimulating neuropeptides and thus seems to provide a feedback mechanism to limit weight gain. The polypeptide is Fructose-1,6-bisphosphatase 1 (Fbp1) (Mus musculus (Mouse)).